A 320-amino-acid chain; its full sequence is Aspartate carbamoyltransferase catalytic subunit (320 aa).

Positions 53 and 54 each coordinate carbamoyl phosphate. Lys82 is an L-aspartate binding site. The carbamoyl phosphate site is built by Arg103, His131, and Gln134. 2 residues coordinate L-aspartate: Arg164 and Arg227. 2 residues coordinate carbamoyl phosphate: Leu266 and Pro267.

This sequence belongs to the aspartate/ornithine carbamoyltransferase superfamily. ATCase family. As to quaternary structure, heterododecamer (2C3:3R2) of six catalytic PyrB chains organized as two trimers (C3), and six regulatory PyrI chains organized as three dimers (R2).

It catalyses the reaction carbamoyl phosphate + L-aspartate = N-carbamoyl-L-aspartate + phosphate + H(+). Its pathway is pyrimidine metabolism; UMP biosynthesis via de novo pathway; (S)-dihydroorotate from bicarbonate: step 2/3. Its function is as follows. Catalyzes the condensation of carbamoyl phosphate and aspartate to form carbamoyl aspartate and inorganic phosphate, the committed step in the de novo pyrimidine nucleotide biosynthesis pathway. This Bifidobacterium longum subsp. infantis (strain ATCC 15697 / DSM 20088 / JCM 1222 / NCTC 11817 / S12) protein is Aspartate carbamoyltransferase catalytic subunit.